The following is a 133-amino-acid chain: Agouti-signaling protein (133 aa).

A signal peptide spans 1–22; it reads MDVSRLLLATLLVCLCFLTAYS. A glycan (N-linked (GlcNAc...) asparagine) is linked at Asn39. Residues 56–95 are disordered; that stretch reads NKKSKKISRNEAEKKKRPSKRKAPMKNVARTRPPPPTPCV. Basic residues predominate over residues 70–79; the sequence is KKRPSKRKAP. 5 cysteine pairs are disulfide-bonded: Cys94–Cys109, Cys101–Cys115, Cys108–Cys126, Cys112–Cys133, and Cys117–Cys124. Residues 94–133 enclose the Agouti domain; that stretch reads CVATRDSCKPPAPACCDPCAFCQCRFFRSACSCRVLNPTC.

The protein resides in the secreted. Its function is as follows. Involved in the regulation of melanogenesis. The binding of ASP to MC1R precludes alpha-MSH initiated signaling and thus blocks production of cAMP, leading to a down-regulation of eumelanogenesis (brown/black pigment) and thus increasing synthesis of pheomelanin (yellow/red pigment). In Bos taurus (Bovine), this protein is Agouti-signaling protein (ASIP).